Here is a 337-residue protein sequence, read N- to C-terminus: Anaerobic sulfite reductase subunit C (337 aa).

[4Fe-4S] cluster is bound by residues C115, C121, C153, C157, C180, C183, C186, C190, C212, C215, C218, and C222. Siroheme is bound at residue C157. 4Fe-4S ferredoxin-type domains follow at residues 171 to 200 and 203 to 232; these read AKMR…CLAL and GKAV…RKPD.

It belongs to the nitrite and sulfite reductase 4Fe-4S domain family. In terms of assembly, the anaerobic sulfite reductase seems to consist of three subunits. Requires [4Fe-4S] cluster as cofactor. It depends on siroheme as a cofactor.

It is found in the cytoplasm. It carries out the reaction hydrogen sulfide + 3 NAD(+) + 3 H2O = sulfite + 3 NADH + 4 H(+). It functions in the pathway sulfur metabolism; sulfite reduction. In terms of biological role, this enzyme catalyzes the hydrogen sulfide production from sulfite. It is strictly anaerobic. It is regulated by electron acceptors rather than by cysteine. This is Anaerobic sulfite reductase subunit C (asrC) from Salmonella typhi.